A 151-amino-acid chain; its full sequence is Deoxyuridine 5'-triphosphate nucleotidohydrolase (151 aa).

Residues 70 to 72, asparagine 83, 87 to 89, and methionine 97 each bind substrate; these read RSG and LID.

This sequence belongs to the dUTPase family. Requires Mg(2+) as cofactor.

It carries out the reaction dUTP + H2O = dUMP + diphosphate + H(+). It functions in the pathway pyrimidine metabolism; dUMP biosynthesis; dUMP from dCTP (dUTP route): step 2/2. This enzyme is involved in nucleotide metabolism: it produces dUMP, the immediate precursor of thymidine nucleotides and it decreases the intracellular concentration of dUTP so that uracil cannot be incorporated into DNA. This is Deoxyuridine 5'-triphosphate nucleotidohydrolase from Actinobacillus pleuropneumoniae serotype 5b (strain L20).